The primary structure comprises 376 residues: MSKRDYYEVLGVGRDASEREIKKAYKRLAMKFHPDRNPGDKAAEASFKEAKEAYEILTDTDKKAAYDQFGHAGVDPNRGGGYGGGQGDFGDIFGDVFGDIFGGGRRGGQRQAARGSDLRYNLELSLEEAVKGLTKELRIPTLATCDLCDGSGAKKGTSASTCTTCHGQGQVQMRQGFFTVQQPCPTCHGRGKIIKDPCSKCHGDGRVEKSKTLSVKIPAGVDTGDRIRLAGEGEAGEFGAPPGDLYVQVSVREHAIFVRDGNNLYCEVPISFSKAALGGEIEVPTLDGKVSLKIPAETQTGRMFRLRGKGVKSVRSHAVGDLLCKVVMETPVNLNDRQKELLREFEATLTGESKKHSPKAEGFFDGVKKFFQDLNS.

Positions 5-70 constitute a J domain; that stretch reads DYYEVLGVGR…DKKAAYDQFG (66 aa). The segment at 132-210 adopts a CR-type zinc-finger fold; sequence GLTKELRIPT…CHGDGRVEKS (79 aa). Positions 145, 148, 162, 165, 184, 187, 198, and 201 each coordinate Zn(2+). CXXCXGXG motif repeat units lie at residues 145-152, 162-169, 184-191, and 198-205; these read CDLCDGSG, CTTCHGQG, CPTCHGRG, and CSKCHGDG.

Belongs to the DnaJ family. In terms of assembly, homodimer. The cofactor is Zn(2+).

The protein resides in the cytoplasm. Its function is as follows. Participates actively in the response to hyperosmotic and heat shock by preventing the aggregation of stress-denatured proteins and by disaggregating proteins, also in an autonomous, DnaK-independent fashion. Unfolded proteins bind initially to DnaJ; upon interaction with the DnaJ-bound protein, DnaK hydrolyzes its bound ATP, resulting in the formation of a stable complex. GrpE releases ADP from DnaK; ATP binding to DnaK triggers the release of the substrate protein, thus completing the reaction cycle. Several rounds of ATP-dependent interactions between DnaJ, DnaK and GrpE are required for fully efficient folding. Also involved, together with DnaK and GrpE, in the DNA replication of plasmids through activation of initiation proteins. This Shewanella sp. (strain W3-18-1) protein is Chaperone protein DnaJ.